A 184-amino-acid chain; its full sequence is Large ribosomal subunit protein uL6 (184 aa).

This sequence belongs to the universal ribosomal protein uL6 family. As to quaternary structure, part of the 50S ribosomal subunit.

This protein binds to the 23S rRNA, and is important in its secondary structure. It is located near the subunit interface in the base of the L7/L12 stalk, and near the tRNA binding site of the peptidyltransferase center. The polypeptide is Large ribosomal subunit protein uL6 (Salinibacter ruber (strain DSM 13855 / M31)).